We begin with the raw amino-acid sequence, 1400 residues long: DNA-directed RNA polymerase subunit beta' (1400 aa).

4 residues coordinate Zn(2+): cysteine 70, cysteine 72, cysteine 85, and cysteine 88. Residues aspartate 460, aspartate 462, and aspartate 464 each coordinate Mg(2+). Zn(2+) contacts are provided by cysteine 814, cysteine 888, cysteine 895, and cysteine 898.

Belongs to the RNA polymerase beta' chain family. The RNAP catalytic core consists of 2 alpha, 1 beta, 1 beta' and 1 omega subunit. When a sigma factor is associated with the core the holoenzyme is formed, which can initiate transcription. It depends on Mg(2+) as a cofactor. Requires Zn(2+) as cofactor.

The catalysed reaction is RNA(n) + a ribonucleoside 5'-triphosphate = RNA(n+1) + diphosphate. In terms of biological role, DNA-dependent RNA polymerase catalyzes the transcription of DNA into RNA using the four ribonucleoside triphosphates as substrates. This Methylococcus capsulatus (strain ATCC 33009 / NCIMB 11132 / Bath) protein is DNA-directed RNA polymerase subunit beta'.